A 97-amino-acid chain; its full sequence is Co-chaperonin GroES (97 aa).

Belongs to the GroES chaperonin family. As to quaternary structure, heptamer of 7 subunits arranged in a ring. Interacts with the chaperonin GroEL.

It localises to the cytoplasm. Functionally, together with the chaperonin GroEL, plays an essential role in assisting protein folding. The GroEL-GroES system forms a nano-cage that allows encapsulation of the non-native substrate proteins and provides a physical environment optimized to promote and accelerate protein folding. GroES binds to the apical surface of the GroEL ring, thereby capping the opening of the GroEL channel. This is Co-chaperonin GroES from Aeromonas hydrophila subsp. hydrophila (strain ATCC 7966 / DSM 30187 / BCRC 13018 / CCUG 14551 / JCM 1027 / KCTC 2358 / NCIMB 9240 / NCTC 8049).